Consider the following 320-residue polypeptide: Mitochondrial ribosome-associated GTPase 1 (320 aa).

Residues 37-209 (LKQMRASPRK…LLDTPGVLPP (173 aa)) enclose the CP-type G domain. GTP contacts are provided by residues 81–84 (NKMD), 153–158 (NVGKSS), and glycine 205.

The protein belongs to the TRAFAC class YlqF/YawG GTPase family. MTG1 subfamily.

Its subcellular location is the mitochondrion inner membrane. Its function is as follows. Plays a role in the regulation of the mitochondrial ribosome assembly and of translational activity. Displays mitochondrial GTPase activity. The sequence is that of Mitochondrial ribosome-associated GTPase 1 from Ictalurus punctatus (Channel catfish).